Reading from the N-terminus, the 890-residue chain is Putative RNA-binding protein 15B (890 aa).

Residues 1–133 are disordered; the sequence is MKRQSERDSS…AEPACPGSSA (133 aa). Over residues 10–20 the composition is skewed to low complexity; the sequence is SPSGRGSSSSA. Composition is skewed to basic and acidic residues over residues 22-34 and 66-78; these read RPREREREAEAGG and GHRDGRGTGDANH. A compositionally biased stretch (gly residues) spans 86–99; it reads SGSGAGGGGRGGKA. Phosphoserine is present on residues S109 and S113. Pro residues predominate over residues 113–124; that stretch reads SPLPPPPPPPGA. Residues 139-219 enclose the RRM 1 domain; the sequence is KTLLISSLSP…RPLKVEPVYL (81 aa). Residue K213 forms a Glycyl lysine isopeptide (Lys-Gly) (interchain with G-Cter in SUMO2) linkage. The interval 219-253 is disordered; the sequence is LRGGGGSSRRSSSSSAAASTPPPGPPAPADPLGYL. Low complexity predominate over residues 226–237; that stretch reads SRRSSSSSAAAS. The span at 238–247 shows a compositional bias: pro residues; sequence TPPPGPPAPA. Phosphoserine is present on residues S265 and S267. RRM domains lie at 337 to 414 and 418 to 492; these read RNLF…YGKA and TRLW…FAKA. T532 bears the Phosphothreonine mark. The disordered stretch occupies residues 547-705; it reads EGDWTSPSKS…KPLEEPKHET (159 aa). S552, S556, and S562 each carry phosphoserine. 2 stretches are compositionally biased toward basic and acidic residues: residues 573-616 and 626-646; these read RSGE…ERSR and RGSDRTPERSRKENHSSEGTK. The Nuclear localization signal signature appears at 593 to 597; that stretch reads RRKRR. Low complexity predominate over residues 647 to 657; that stretch reads ESSSNSLSNSR. Residues 671–703 show a composition bias toward basic and acidic residues; sequence EAADSSHGKKARDSERNHRTTEAEPKPLEEPKH. K702 participates in a covalent cross-link: Glycyl lysine isopeptide (Lys-Gly) (interchain with G-Cter in SUMO2). Residues 711-889 enclose the SPOC domain; it reads LSEYAQTLQL…HMVIVIVRDT (179 aa). The interval 722 to 890 is interaction with Epstein-Barr virus BMLF1; that stretch reads WNGLLVLKNS…MVIVIVRDTA (169 aa).

The protein belongs to the RRM Spen family. Component of the WMM complex, a N6-methyltransferase complex composed of a catalytic subcomplex, named MAC, and of an associated subcomplex, named MACOM. The MAC subcomplex is composed of METTL3 and METTL14. The MACOM subcomplex is composed of WTAP, ZC3H13, CBLL1/HAKAI, VIRMA, and, in some cases of RBM15 (RBM15 or RBM15B). May interact with NCOR2. Interacts with NXF1, the interaction is required to promote mRNA export. As to quaternary structure, (Microbial infection) Interacts (via the SPOC domain) with Epstein-Barr virus BMLF1 (via the N-terminus); the interaction is direct. Ubiquitously expressed.

It localises to the nucleus. The protein localises to the nucleoplasm. The protein resides in the nucleus speckle. It is found in the nucleus envelope. Functionally, RNA-binding protein that acts as a key regulator of N6-methyladenosine (m6A) methylation of RNAs, thereby regulating different processes, such as alternative splicing of mRNAs and X chromosome inactivation mediated by Xist RNA. Associated component of the WMM complex, a complex that mediates N6-methyladenosine (m6A) methylation of RNAs, a modification that plays a role in the efficiency of mRNA splicing and RNA processing. Plays a key role in m6A methylation, possibly by binding target RNAs and recruiting the WMM complex. Involved in random X inactivation mediated by Xist RNA: acts by binding Xist RNA and recruiting the WMM complex, which mediates m6A methylation, leading to target YTHDC1 reader on Xist RNA and promoting transcription repression activity of Xist. Functions in the regulation of alternative or illicit splicing, possibly by regulating m6A methylation. Inhibits pre-mRNA splicing. Also functions as a mRNA export factor by acting as a cofactor for the nuclear export receptor NXF1. In Homo sapiens (Human), this protein is Putative RNA-binding protein 15B.